A 495-amino-acid polypeptide reads, in one-letter code: Aspartyl/glutamyl-tRNA(Asn/Gln) amidotransferase subunit B (495 aa).

Belongs to the GatB/GatE family. GatB subfamily. In terms of assembly, heterotrimer of A, B and C subunits.

It carries out the reaction L-glutamyl-tRNA(Gln) + L-glutamine + ATP + H2O = L-glutaminyl-tRNA(Gln) + L-glutamate + ADP + phosphate + H(+). The catalysed reaction is L-aspartyl-tRNA(Asn) + L-glutamine + ATP + H2O = L-asparaginyl-tRNA(Asn) + L-glutamate + ADP + phosphate + 2 H(+). Allows the formation of correctly charged Asn-tRNA(Asn) or Gln-tRNA(Gln) through the transamidation of misacylated Asp-tRNA(Asn) or Glu-tRNA(Gln) in organisms which lack either or both of asparaginyl-tRNA or glutaminyl-tRNA synthetases. The reaction takes place in the presence of glutamine and ATP through an activated phospho-Asp-tRNA(Asn) or phospho-Glu-tRNA(Gln). The chain is Aspartyl/glutamyl-tRNA(Asn/Gln) amidotransferase subunit B from Methylocella silvestris (strain DSM 15510 / CIP 108128 / LMG 27833 / NCIMB 13906 / BL2).